We begin with the raw amino-acid sequence, 546 residues long: Pyrophosphate--fructose 6-phosphate 1-phosphotransferase (546 aa).

Gly80 contacts diphosphate. Position 174 (Asp174) interacts with Mg(2+). Substrate is bound by residues 202-204, 241-242, 249-251, Glu310, and 420-423; these read TID, KY, MGR, and YEGR. The active-site Proton acceptor is the Asp204.

This sequence belongs to the phosphofructokinase type A (PFKA) family. PPi-dependent PFK group II subfamily. Clade 'Long' sub-subfamily. In terms of assembly, homodimer. Mg(2+) serves as cofactor. Requires Mn(2+) as cofactor.

It localises to the cytoplasm. It catalyses the reaction beta-D-fructose 6-phosphate + diphosphate = beta-D-fructose 1,6-bisphosphate + phosphate + H(+). It functions in the pathway carbohydrate degradation; glycolysis; D-glyceraldehyde 3-phosphate and glycerone phosphate from D-glucose: step 3/4. Non-allosteric. Competitively inhibited by PPi, Pi and fructose 1,6-bisphosphate. Catalyzes the phosphorylation of D-fructose 6-phosphate, the first committing step of glycolysis. Uses inorganic phosphate (PPi) as phosphoryl donor instead of ATP like common ATP-dependent phosphofructokinases (ATP-PFKs), which renders the reaction reversible, and can thus function both in glycolysis and gluconeogenesis. Consistently, PPi-PFK can replace the enzymes of both the forward (ATP-PFK) and reverse (fructose-bisphosphatase (FBPase)) reactions. This Entamoeba histolytica (strain ATCC 30459 / HM-1:IMSS / ABRM) protein is Pyrophosphate--fructose 6-phosphate 1-phosphotransferase.